The primary structure comprises 366 residues: Chaperone protein DnaJ (366 aa).

Positions 5 to 69 (DYYEVLGVSK…QKRAQYDQFG (65 aa)) constitute a J domain. A CR-type zinc finger spans residues 128 to 210 (GKELNVEIPV…CHGTGKVRKR (83 aa)). Zn(2+) is bound by residues Cys141, Cys144, Cys158, Cys161, Cys184, Cys187, Cys198, and Cys201. CXXCXGXG motif repeat units lie at residues 141–148 (CDTCHGSG), 158–165 (CKYCSGTG), 184–191 (CRHCSGTG), and 198–205 (CTTCHGTG).

The protein belongs to the DnaJ family. As to quaternary structure, homodimer. Requires Zn(2+) as cofactor.

It is found in the cytoplasm. Participates actively in the response to hyperosmotic and heat shock by preventing the aggregation of stress-denatured proteins and by disaggregating proteins, also in an autonomous, DnaK-independent fashion. Unfolded proteins bind initially to DnaJ; upon interaction with the DnaJ-bound protein, DnaK hydrolyzes its bound ATP, resulting in the formation of a stable complex. GrpE releases ADP from DnaK; ATP binding to DnaK triggers the release of the substrate protein, thus completing the reaction cycle. Several rounds of ATP-dependent interactions between DnaJ, DnaK and GrpE are required for fully efficient folding. Also involved, together with DnaK and GrpE, in the DNA replication of plasmids through activation of initiation proteins. This Bacillus cytotoxicus (strain DSM 22905 / CIP 110041 / 391-98 / NVH 391-98) protein is Chaperone protein DnaJ.